The primary structure comprises 262 residues: Adenosylcobinamide-GDP ribazoletransferase (262 aa).

The next 5 membrane-spanning stretches (helical) occupy residues 41–61 (AFPLAAILITLPAAAIAFILG), 65–85 (ASSLFSAFLVVAVQAMVTGAL), 115–132 (IGTYGAVALILSFGLRVS), 134–156 (LAAFLPLLTPTGGGIALLATAAL), and 195–215 (GVLLALVLFFLAGIPTVAVWL).

The protein belongs to the CobS family. Mg(2+) serves as cofactor.

It localises to the cell inner membrane. It catalyses the reaction alpha-ribazole + adenosylcob(III)inamide-GDP = adenosylcob(III)alamin + GMP + H(+). It carries out the reaction alpha-ribazole 5'-phosphate + adenosylcob(III)inamide-GDP = adenosylcob(III)alamin 5'-phosphate + GMP + H(+). Its pathway is cofactor biosynthesis; adenosylcobalamin biosynthesis; adenosylcobalamin from cob(II)yrinate a,c-diamide: step 7/7. Joins adenosylcobinamide-GDP and alpha-ribazole to generate adenosylcobalamin (Ado-cobalamin). Also synthesizes adenosylcobalamin 5'-phosphate from adenosylcobinamide-GDP and alpha-ribazole 5'-phosphate. This chain is Adenosylcobinamide-GDP ribazoletransferase, found in Rhizobium meliloti (strain 1021) (Ensifer meliloti).